The sequence spans 128 residues: Large-conductance mechanosensitive channel (128 aa).

Transmembrane regions (helical) follow at residues 10-30 (FAMR…GAFG) and 76-96 (GMFI…FLMI).

It belongs to the MscL family. Homopentamer.

It is found in the cell inner membrane. Its function is as follows. Channel that opens in response to stretch forces in the membrane lipid bilayer. May participate in the regulation of osmotic pressure changes within the cell. This Actinobacillus succinogenes (strain ATCC 55618 / DSM 22257 / CCUG 43843 / 130Z) protein is Large-conductance mechanosensitive channel.